The chain runs to 145 residues: Hemoglobin fetal subunit beta (145 aa).

The region spanning 1-145 (MLSAEEKASV…VANALAHRYH (145 aa)) is the Globin domain. His-62 and His-91 together coordinate heme b.

It belongs to the globin family. In terms of assembly, heterotetramer of two alpha chains and two beta chains. As to expression, red blood cells.

Functionally, involved in oxygen transport from the lung to the various peripheral tissues. The protein is Hemoglobin fetal subunit beta of Capra hircus (Goat).